The following is a 403-amino-acid chain: Phosphoglycerate kinase (403 aa).

Residues D24–N26, R39, H62–R65, R121, and R161 contribute to the substrate site. ATP contacts are provided by residues K211, G299, E330, and G359 to S362.

Belongs to the phosphoglycerate kinase family. As to quaternary structure, monomer.

It localises to the cytoplasm. It catalyses the reaction (2R)-3-phosphoglycerate + ATP = (2R)-3-phospho-glyceroyl phosphate + ADP. It participates in carbohydrate degradation; glycolysis; pyruvate from D-glyceraldehyde 3-phosphate: step 2/5. This Rhodococcus opacus (strain B4) protein is Phosphoglycerate kinase.